A 145-amino-acid chain; its full sequence is MGCGGSRADAIEPRYYESWTRETESTWLTYTDSDALPSAAATDSGPEAGGLHAGVLEDGLSSNGVLRPAAPGGIANPEKKMNCGTQCPNSQNLSSGPLTQKQNGLWATEAKRDAKRMSAREVAINVTENIRQMDRSKRVTKNCIN.

Glycine 2 carries N-myristoyl glycine lipidation. Residue cysteine 3 is the site of S-palmitoyl cysteine attachment. Residues 3 to 35 (CGGSRADAIEPRYYESWTRETESTWLTYTDSDA) form an interaction with CAMK2A region. Disordered regions lie at residues 36–56 (LPSA…AGVL) and 87–109 (CPNS…WATE). The span at 87–105 (CPNSQNLSSGPLTQKQNGL) shows a compositional bias: polar residues.

Interacts with CAMK2A. Post-translationally, palmitoylation and myristoylation target the protein to the lipid rafts. At the mRNA level, predominantly expressed in the brain. At the protein level, mainly expressed in muscle tissues. In skeletal muscles, expressed in cranial and facial muscles, muscles of the neck, back, thoracic wall, and thigh. Also found in the contractile myoepithelial cell layer of salivary glands. In smooth muscles, expressed in the gastric wall, uterus, urinary bladder, as well as in the muscular lining around seminiferous tubules, prostatic ducts, epididymis, vas deferens, walls of small blood vessels in the dermis, and fascial layers between muscle fibers, brain, and around the spinal cord. Strongly expressed in myocardium. High expression levels are observed in placental spongiotrophoblast and adjacent myometrium. Also expressed in bone marrow hematopoietic cells. In the mature thymus, expressed in rare scattered cells. Weakly expressed in the brain neuropil, particularly near the hippocampus, and spinal cord white matter. Not detected in skin keratinocytes or lung (at protein level).

It is found in the cytoplasm. The protein localises to the synapse. Its subcellular location is the synaptosome. The protein resides in the membrane raft. It localises to the postsynaptic density. In terms of biological role, may play a synaptic role at the postsynaptic lipid rafts possibly through interaction with CAMK2A. The protein is Brain and acute leukemia cytoplasmic protein (Baalc) of Mus musculus (Mouse).